The chain runs to 515 residues: SWI/SNF-related matrix-associated actin-dependent regulator of chromatin subfamily D member 1 (515 aa).

Residues 1 to 128 are disordered; it reads MAARAGFQSV…RNHNAKKKKM (128 aa). The segment covering 14 to 23 has biased composition (gly residues); it reads GGAGASGGAG. Positions 43-167 are interaction with ESR1, NR1H4, NR3C1, PGR and SMARCA4; sequence APGQGLYRSP…DQTIMRKRLD (125 aa). Arginine 68 and arginine 88 each carry asymmetric dimethylarginine. Lysine 101 is covalently cross-linked (Glycyl lysine isopeptide (Lys-Gly) (interchain with G-Cter in SUMO2)). The span at 103 to 117 shows a compositional bias: low complexity; the sequence is PAPQQIKQVQQQAVQ. The interval 168–474 is interaction with SMARCC1 and SMARCC2; it reads IQEALKRPIK…VMTDVVGNSE (307 aa). Positions 180 to 515 are necessary for GR/NR3C1-mediated remodeling and transcription from chromatin; required for GR/NR3C1 interaction with the BRG1/SMARCA4 complex in vivo; that stretch reads RKLRIFISNT…LEQALGIRNT (336 aa). Threonine 203 is modified (phosphothreonine). Lysine 223 carries the post-translational modification N6-acetyllysine. Residues 290-367 enclose the SWIB/MDM2 domain; that stretch reads YQPPQFKLDP…PQRLHALLMP (78 aa). Residues 412 to 440 are a coiled coil; sequence ASQQEIATLDNKIHETIETINQLKTQREF.

Belongs to the SMARCD family. In terms of assembly, component of the multiprotein chromatin-remodeling complexes SWI/SNF: SWI/SNF-A (BAF), SWI/SNF-B (PBAF) and related complexes. The canonical complex contains a catalytic subunit (either SMARCA4/BRG1/BAF190A or SMARCA2/BRM/BAF190B), and at least SMARCE1, ACTL6A/BAF53, SMARCC1/BAF155, SMARCC2/BAF170, and SMARCB1/SNF5/BAF47. Other subunits specific to each of the complexes may also be present permitting several possible combinations developmentally and tissue specific. Component of the BAF complex, which includes at least actin (ACTB), ARID1A/BAF250A, ARID1B/BAF250B, SMARCA2/BRM, SMARCA4/BRG1/BAF190A, ACTL6A/BAF53, ACTL6B/BAF53B, SMARCE1/BAF57, SMARCC1/BAF155, SMARCC2/BAF170, SMARCB1/SNF5/INI1, and one or more SMARCD1/BAF60A, SMARCD2/BAF60B, or SMARCD3/BAF60C. In muscle cells, the BAF complex also contains DPF3. Component of neural progenitors-specific chromatin remodeling complex (npBAF complex) composed of at least, ARID1A/BAF250A or ARID1B/BAF250B, SMARCD1/BAF60A, SMARCD3/BAF60C, SMARCA2/BRM/BAF190B, SMARCA4/BRG1/BAF190A, SMARCB1/BAF47, SMARCC1/BAF155, SMARCE1/BAF57, SMARCC2/BAF170, PHF10/BAF45A, ACTL6A/BAF53A and actin. Component of neuron-specific chromatin remodeling complex (nBAF complex) composed of at least, ARID1A/BAF250A or ARID1B/BAF250B, SMARCD1/BAF60A, SMARCD3/BAF60C, SMARCA2/BRM/BAF190B, SMARCA4/BRG1/BAF190A, SMARCB1/BAF47, SMARCC1/BAF155, SMARCE1/BAF57, SMARCC2/BAF170, DPF1/BAF45B, DPF3/BAF45C, ACTL6B/BAF53B and actin. Component of the SWI/SNF-B (PBAF) chromatin remodeling complex, at least composed of SMARCA4/BRG1, SMARCB1/BAF47/SNF5, ACTL6A/BAF53A or ACTL6B/BAF53B, SMARCE1/BAF57, SMARCD1/BAF60A, SMARCD2/BAF60B, perhaps SMARCD3/BAF60C, SMARCC1/BAF155, SMARCC2/BAF170, PBRM1/BAF180, ARID2/BAF200 and actin (ACTB). Component of SWI/SNF (GBAF) subcomplex, which includes at least BICRA or BICRAL (mutually exclusive), BRD9, SS18, SMARCA2/BRM, SMARCA4/BRG1/BAF190A, ACTL6A/BAF53, SMARCC1/BAF155, and SMARCD1/BAF60A. Specifically interacts with the VDR heterodimer complex. Interacts with ESR1, NR3C1, NR1H4, PGR, SMARCA4, SMARCC1 and SMARCC2. Interacts with DPF2. Interacts with FOS, FOSB, FOSL1 and FOSL2.

It localises to the nucleus. In terms of biological role, involved in transcriptional activation and repression of select genes by chromatin remodeling (alteration of DNA-nucleosome topology). Component of SWI/SNF chromatin remodeling complexes that carry out key enzymatic activities, changing chromatin structure by altering DNA-histone contacts within a nucleosome in an ATP-dependent manner. Belongs to the neural progenitors-specific chromatin remodeling complex (npBAF complex) and the neuron-specific chromatin remodeling complex (nBAF complex). During neural development a switch from a stem/progenitor to a postmitotic chromatin remodeling mechanism occurs as neurons exit the cell cycle and become committed to their adult state. The transition from proliferating neural stem/progenitor cells to postmitotic neurons requires a switch in subunit composition of the npBAF and nBAF complexes. As neural progenitors exit mitosis and differentiate into neurons, npBAF complexes which contain ACTL6A/BAF53A and PHF10/BAF45A, are exchanged for homologous alternative ACTL6B/BAF53B and DPF1/BAF45B or DPF3/BAF45C subunits in neuron-specific complexes (nBAF). The npBAF complex is essential for the self-renewal/proliferative capacity of the multipotent neural stem cells. The nBAF complex along with CREST plays a role regulating the activity of genes essential for dendrite growth. Has a strong influence on vitamin D-mediated transcriptional activity from an enhancer vitamin D receptor element (VDRE). May be a link between mammalian SWI-SNF-like chromatin remodeling complexes and the vitamin D receptor (VDR) heterodimer. Mediates critical interactions between nuclear receptors and the BRG1/SMARCA4 chromatin-remodeling complex for transactivation. Interacts with AKIRIN2. This is SWI/SNF-related matrix-associated actin-dependent regulator of chromatin subfamily D member 1 (SMARCD1) from Bos taurus (Bovine).